We begin with the raw amino-acid sequence, 293 residues long: Phosphoribosylaminoimidazole-succinocarboxamide synthase (293 aa).

This sequence belongs to the SAICAR synthetase family.

It carries out the reaction 5-amino-1-(5-phospho-D-ribosyl)imidazole-4-carboxylate + L-aspartate + ATP = (2S)-2-[5-amino-1-(5-phospho-beta-D-ribosyl)imidazole-4-carboxamido]succinate + ADP + phosphate + 2 H(+). Its pathway is purine metabolism; IMP biosynthesis via de novo pathway; 5-amino-1-(5-phospho-D-ribosyl)imidazole-4-carboxamide from 5-amino-1-(5-phospho-D-ribosyl)imidazole-4-carboxylate: step 1/2. In Bordetella petrii (strain ATCC BAA-461 / DSM 12804 / CCUG 43448), this protein is Phosphoribosylaminoimidazole-succinocarboxamide synthase.